Here is a 687-residue protein sequence, read N- to C-terminus: SLCO1B3-SLCO1B7 readthrough transcript protein (687 aa).

Topologically, residues 1-29 (MDQHQHLNKTAESASSEKKKTRRCNGFKM) are cytoplasmic. A helical membrane pass occupies residues 30–50 (FLAALSFSYIAKALGGIIMKI). At 51–63 (SITQIERRFDISS) the chain is on the extracellular side. A helical transmembrane segment spans residues 64–84 (SLAGLIDGSFEIGNLLVIVFV). Residues 85–96 (SYFGSKLHRPKL) lie on the Cytoplasmic side of the membrane. Residues 97–117 (IGIGCLLMGTGSILTSLPHFF) traverse the membrane as a helical segment. At 118–170 (MGYYRYSKETNIDPSENSTSNLPNCLINQMLSLNRTPSEIIERGCVKESGSHM) the chain is on the extracellular side. Residues N134 and N151 are each glycosylated (N-linked (GlcNAc...) asparagine). A helical membrane pass occupies residues 171 to 191 (WIYVFMGNMLRGIGETPIVPL). The Cytoplasmic segment spans residues 192–206 (GISYIDDFAKEGHSS). The chain crosses the membrane as a helical span at residues 207–227 (LYLGTVNVMGMTGLVFAFMLG). Over 228–258 (SLFAKMYVDIGYVDLSTIRITPKDSRWVGAW) the chain is Extracellular. The chain crosses the membrane as a helical span at residues 259 to 279 (WLGFLVSGIVSIISSIPFFFL). At 280-339 (PLNPNKPQKERKVSLFLHVLKTNDKRNQIANLTNRRKYITKNVTGFFQSLKSILTNPLYV) the chain is on the cytoplasmic side. Residues 340 to 360 (IFVIFTLLHMSSYIASLTYII) traverse the membrane as a helical segment. Over 361–376 (KMVEQQYGWSASKTNF) the chain is Extracellular. The helical transmembrane segment at 377 to 397 (LLGVLALPAVAIGMFSGGYII) threads the bilayer. Residues 398–409 (KKFKLSLVGLAK) are Cytoplasmic-facing. A helical membrane pass occupies residues 410–430 (LAFCSATVHLLSQVLYFFLIC). The Extracellular segment spans residues 431–539 (ESKSVAGLTL…CTRKSYVYFV (109 aa)). The 56-residue stretch at 453–508 (DVPLSYCNSECNCDESQWEPVCGNNGITYLSPCLAGCKSSSGNKEPIVFYNCSCVE) folds into the Kazal-like domain. Disulfide bonds link C459/C489, C465/C485, and C474/C506. 2 N-linked (GlcNAc...) asparagine glycosylation sites follow: N503 and N516. Residues 540 to 560 (IQVLDAFLCAVGLTSYSVLVI) form a helical membrane-spanning segment. Over 561–568 (RIVQPELK) the chain is Cytoplasmic. Residues 569–589 (ALAIGFHSMIMRSLGGILVPI) form a helical membrane-spanning segment. At 590–624 (YFGALIDTTCMKWSTNSCGARGACRIYNSTYLGRA) the chain is on the extracellular side. An N-linked (GlcNAc...) asparagine glycan is attached at N617. A helical transmembrane segment spans residues 625 to 645 (FFGLKVALIFPVLVLLTVFIF). Residues 646-687 (VVRKKSHGKDTKVLENERQVMDEANLEFLNDSEHFVPSAEEQ) lie on the Cytoplasmic side of the membrane.

The protein belongs to the organo anion transporter (TC 2.A.60) family. As to expression, expressed in the perivenular areas (centrilobular) of the liver (at protein level).

The protein localises to the smooth endoplasmic reticulum membrane. Its subcellular location is the cell membrane. It localises to the endoplasmic reticulum membrane. The enzyme catalyses 17beta-estradiol 17-O-(beta-D-glucuronate)(out) = 17beta-estradiol 17-O-(beta-D-glucuronate)(in). It carries out the reaction dehydroepiandrosterone 3-sulfate(out) = dehydroepiandrosterone 3-sulfate(in). The catalysed reaction is taurocholate(out) = taurocholate(in). It catalyses the reaction lithocholate(out) = lithocholate(in). With respect to regulation, transport activity is induced by farnesoid X receptor (FXR) agonists such as chenodeoxycholate. Functionally, mediates the Na(+)-independent uptake of organic anions. Transports the conjugated steroids 17-beta-glucuronosyl estradiol (17beta-estradiol 17-O-(beta-D-glucuronate) or E2G) and dehydroepiandrosterone 3-sulfate (DHEAS) at the smooth endoplasmic reticulum membrane (SER), granting access to metabolizing enzymes. Contributes to the metabolism of bile acids such as taurocholate (cholyltaurine) and lithocholate, by functioning as a doorway between SER and cytosol, thereby decreasing their circulating levels and protecting the organism from their detergent properties. Regulates access or exit of drugs to the SER lumen. This is SLCO1B3-SLCO1B7 readthrough transcript protein from Homo sapiens (Human).